We begin with the raw amino-acid sequence, 157 residues long: Transmembrane protein 50A (157 aa).

The residue at position 2 (S2) is an N-acetylserine. S2 carries the phosphoserine modification. 4 helical membrane-spanning segments follow: residues 26 to 46 (IAAG…AVMY), 58 to 78 (TCGV…NGQV), 95 to 115 (IWLF…MWIL), and 126 to 146 (VVYP…GGLV).

Belongs to the UPF0220 family.

The protein localises to the membrane. The chain is Transmembrane protein 50A (Tmem50a) from Mus musculus (Mouse).